The following is a 35-amino-acid chain: U1-theraphotoxin-Hs1f (35 aa).

3 disulfides stabilise this stretch: cysteine 3–cysteine 16, cysteine 7–cysteine 27, and cysteine 21–cysteine 32.

The protein belongs to the neurotoxin 12 (Hwtx-2) family. 02 (Hwtx-2) subfamily. In terms of tissue distribution, expressed by the venom gland.

The protein localises to the secreted. Its function is as follows. Blocks neuromuscular transmission. Acts cooperatively to potentiate the activity of huwentoxin-I. Paralyzes locusts and kills mice following intracerebroventricular injection. This chain is U1-theraphotoxin-Hs1f, found in Cyriopagopus schmidti (Chinese bird spider).